The following is a 139-amino-acid chain: Natriuretic peptide Mc-NP (139 aa).

Positions 1-25 (MVGLSRLRGGGLLLVLALLPLALDG) are cleaved as a signal peptide. Residues 26–75 (KPLEEAPTAPSRIIPFSRPVRKQSQAVLDPMVHPERPAGSGDDGDSRRLE) constitute a propeptide that is removed on maturation. Residues 45 to 72 (VRKQSQAVLDPMVHPERPAGSGDDGDSR) form a disordered region. An intrachain disulfide couples Cys-86 to Cys-102. Positions 117–139 (IIPFSRPVRKESRAALDRMQQPG) are excised as a propeptide.

This sequence belongs to the natriuretic peptide family. In terms of tissue distribution, expressed by the venom gland.

It localises to the secreted. Its function is as follows. Snake venom natriuretic peptide that dose-dependently induces the rapid relaxation of rat aortic strips phenylephrine-precontracted. Acts by stimulating cGMP production in a dose-dependent manner (by probably activating NPR1 and/or NPR2). May also show potent hypotensive effects. A synthetic peptide (AA 77-108, where the Cys-95 is replaced by a Ser) increases sodium excretion and urinary volume in rat kidneys. This Micrurus corallinus (Brazilian coral snake) protein is Natriuretic peptide Mc-NP.